The sequence spans 186 residues: Imidazoleglycerol-phosphate dehydratase (186 aa).

It belongs to the imidazoleglycerol-phosphate dehydratase family.

Its subcellular location is the cytoplasm. It carries out the reaction D-erythro-1-(imidazol-4-yl)glycerol 3-phosphate = 3-(imidazol-4-yl)-2-oxopropyl phosphate + H2O. Its pathway is amino-acid biosynthesis; L-histidine biosynthesis; L-histidine from 5-phospho-alpha-D-ribose 1-diphosphate: step 6/9. This Pyrobaculum aerophilum (strain ATCC 51768 / DSM 7523 / JCM 9630 / CIP 104966 / NBRC 100827 / IM2) protein is Imidazoleglycerol-phosphate dehydratase.